A 170-amino-acid chain; its full sequence is Putative beta-eliminating lyase-like protein (170 aa).

Lys-32 is modified (N6-(pyridoxal phosphate)lysine).

The protein belongs to the beta-eliminating lyase family. The cofactor is pyridoxal 5'-phosphate.

This Dictyostelium discoideum (Social amoeba) protein is Putative beta-eliminating lyase-like protein.